A 444-amino-acid chain; its full sequence is 23S rRNA (uracil(1939)-C(5))-methyltransferase RlmD (444 aa).

The 63-residue stretch at 5–67 (RSRIDRTPFQ…RHFDEARTVE (63 aa)) folds into the TRAM domain. [4Fe-4S] cluster is bound by residues cysteine 80, cysteine 86, cysteine 89, and cysteine 168. The S-adenosyl-L-methionine site is built by glutamine 276, phenylalanine 305, asparagine 310, glutamate 326, aspartate 353, and aspartate 374. The Nucleophile role is filled by cysteine 400.

It belongs to the class I-like SAM-binding methyltransferase superfamily. RNA M5U methyltransferase family. RlmD subfamily.

The catalysed reaction is uridine(1939) in 23S rRNA + S-adenosyl-L-methionine = 5-methyluridine(1939) in 23S rRNA + S-adenosyl-L-homocysteine + H(+). Its function is as follows. Catalyzes the formation of 5-methyl-uridine at position 1939 (m5U1939) in 23S rRNA. This chain is 23S rRNA (uracil(1939)-C(5))-methyltransferase RlmD, found in Stenotrophomonas maltophilia (strain K279a).